Consider the following 124-residue polypeptide: MSGVWVFNKNGVMRLVENPYNQSAGDSSESSSSGGNQQQRMRRKILVHLPSSEVVSSYGSLEKILKNLGWERYYSGDNTDHLLQFHKRTSIDLISLPRDFSKFNSIHMYDIVVKNPNVFHVRDM.

The disordered stretch occupies residues 19–42; sequence PYNQSAGDSSESSSSGGNQQQRMR. Over residues 22–39 the composition is skewed to low complexity; the sequence is QSAGDSSESSSSGGNQQQ.

Belongs to the FPF1 family. In terms of tissue distribution, expressed in roots, flowers, and at a low level, in leaves.

Its function is as follows. Modulates the competence to flowering of apical meristems. The polypeptide is Flowering-promoting factor 1-like protein 1 (FLP1) (Arabidopsis thaliana (Mouse-ear cress)).